The following is a 109-amino-acid chain: Ribonuclease P protein component (109 aa).

Belongs to the RnpA family. In terms of assembly, consists of a catalytic RNA component (M1 or rnpB) and a protein subunit.

The enzyme catalyses Endonucleolytic cleavage of RNA, removing 5'-extranucleotides from tRNA precursor.. RNaseP catalyzes the removal of the 5'-leader sequence from pre-tRNA to produce the mature 5'-terminus. It can also cleave other RNA substrates such as 4.5S RNA. The protein component plays an auxiliary but essential role in vivo by binding to the 5'-leader sequence and broadening the substrate specificity of the ribozyme. This chain is Ribonuclease P protein component, found in Mycoplasma mycoides subsp. mycoides SC (strain CCUG 32753 / NCTC 10114 / PG1).